The primary structure comprises 154 residues: Transcription antitermination protein NusB (154 aa).

The protein belongs to the NusB family.

Functionally, involved in transcription antitermination. Required for transcription of ribosomal RNA (rRNA) genes. Binds specifically to the boxA antiterminator sequence of the ribosomal RNA (rrn) operons. The polypeptide is Transcription antitermination protein NusB (Desulfosudis oleivorans (strain DSM 6200 / JCM 39069 / Hxd3) (Desulfococcus oleovorans)).